Consider the following 386-residue polypeptide: Succinate--CoA ligase [ADP-forming] subunit beta (386 aa).

The 236-residue stretch at 9-244 folds into the ATP-grasp domain; sequence KDLLTAYQLP…PSQENIRDVL (236 aa). Residues Lys46, 53–55, Val102, and Glu107 each bind ATP; that span reads GRG. Residues Asn199 and Asp213 each coordinate Mg(2+). Substrate contacts are provided by residues Asn264 and 321 to 323; that span reads GIM.

The protein belongs to the succinate/malate CoA ligase beta subunit family. In terms of assembly, heterotetramer of two alpha and two beta subunits. The cofactor is Mg(2+).

The enzyme catalyses succinate + ATP + CoA = succinyl-CoA + ADP + phosphate. It catalyses the reaction GTP + succinate + CoA = succinyl-CoA + GDP + phosphate. The protein operates within carbohydrate metabolism; tricarboxylic acid cycle; succinate from succinyl-CoA (ligase route): step 1/1. Succinyl-CoA synthetase functions in the citric acid cycle (TCA), coupling the hydrolysis of succinyl-CoA to the synthesis of either ATP or GTP and thus represents the only step of substrate-level phosphorylation in the TCA. The beta subunit provides nucleotide specificity of the enzyme and binds the substrate succinate, while the binding sites for coenzyme A and phosphate are found in the alpha subunit. The chain is Succinate--CoA ligase [ADP-forming] subunit beta from Chlamydia trachomatis serovar L2 (strain ATCC VR-902B / DSM 19102 / 434/Bu).